The following is a 458-amino-acid chain: tRNA modification GTPase MnmE (458 aa).

3 residues coordinate (6S)-5-formyl-5,6,7,8-tetrahydrofolate: Arg-22, Glu-85, and Arg-124. Residues 220-379 (GIKTVIVGRP…LEEHISELVF (160 aa)) form the TrmE-type G domain. Residue Asn-230 participates in K(+) binding. GTP contacts are provided by residues 230 to 235 (NVGKSS), 249 to 255 (TEIPGTT), and 274 to 277 (DTAG). Ser-234 provides a ligand contact to Mg(2+). K(+)-binding residues include Thr-249, Ile-251, and Thr-254. Thr-255 serves as a coordination point for Mg(2+). Lys-458 is a binding site for (6S)-5-formyl-5,6,7,8-tetrahydrofolate.

It belongs to the TRAFAC class TrmE-Era-EngA-EngB-Septin-like GTPase superfamily. TrmE GTPase family. In terms of assembly, homodimer. Heterotetramer of two MnmE and two MnmG subunits. The cofactor is K(+).

It is found in the cytoplasm. Functionally, exhibits a very high intrinsic GTPase hydrolysis rate. Involved in the addition of a carboxymethylaminomethyl (cmnm) group at the wobble position (U34) of certain tRNAs, forming tRNA-cmnm(5)s(2)U34. The sequence is that of tRNA modification GTPase MnmE from Natranaerobius thermophilus (strain ATCC BAA-1301 / DSM 18059 / JW/NM-WN-LF).